The primary structure comprises 376 residues: ORC1-type DNA replication protein 2 (376 aa).

Residues 73–77, Y209, and R221 each bind ATP; that span reads TGKTS.

This sequence belongs to the CDC6/cdc18 family.

Its function is as follows. Involved in regulation of DNA replication. In Archaeoglobus fulgidus (strain ATCC 49558 / DSM 4304 / JCM 9628 / NBRC 100126 / VC-16), this protein is ORC1-type DNA replication protein 2 (cdc6-2).